A 359-amino-acid chain; its full sequence is MATHQVDAVVLVGGKGTRLRPLTLSAPKPMLPTAGLPFLTHLLSRIAAAGIEHVILGTSYKPAVFEAEFGDGSALGLQIEYVTEEHPLGTGGGIANVAGKLRNDTAMVFNGDVLSGADLAQLLDFHRSNRADVTLQLVRVGDPRAFGCVPTDEEDRVVAFLEKTEDPPTDQINAGCYVFERNVIDRIPQGREVSVEREVFPALLADGDCKIYGYVDASYWRDMGTPEDFVRGSADLVRGIAPSPALRGHRGEQLVHDGAAVSPGALLIGGTVVGRGAEIGPGTRLDGAVIFDGVRVEAGCVIERSIIGFGARIGPRALIRDGVIGDGADIGARCELLSGARVWPGVFLPDGGIRYSSDV.

Belongs to the transferase hexapeptide repeat family.

The catalysed reaction is alpha-D-mannose 1-phosphate + GTP + H(+) = GDP-alpha-D-mannose + diphosphate. It participates in cell wall biogenesis. Its pathway is nucleotide-sugar biosynthesis; GDP-alpha-D-mannose biosynthesis; GDP-alpha-D-mannose from alpha-D-mannose 1-phosphate (GTP route): step 1/1. In terms of biological role, catalyzes the formation of GDP-mannose from D-mannose-1-phosphate and GTP. Plays an important role in the synthesis of different glycoconjugates which are responsible for cell wall structure, virulence and immunomodulatory activity of M.tuberculosis. The chain is Mannose-1-phosphate guanylyltransferase from Mycobacterium tuberculosis (strain ATCC 25618 / H37Rv).